The following is a 272-amino-acid chain: Ras-related protein RSR1 (272 aa).

10–17 (GAGGVGKS) contacts GTP. Positions 32–40 (YDPTIEDSY) match the Effector region motif. Residues 57–61 (DTAGI) and 116–119 (NKAD) each bind GTP. The interval 177 to 272 (DARNQSQQFS…KKNASTCTIL (96 aa)) is disordered. 2 stretches are compositionally biased toward polar residues: residues 180–232 (NQSQ…STPV) and 245–258 (SGSS…ATSQ). Cysteine 269 is modified (cysteine methyl ester). Residue cysteine 269 is the site of S-geranylgeranyl cysteine attachment. A propeptide spans 270 to 272 (TIL) (removed in mature form).

This sequence belongs to the small GTPase superfamily. Ras family.

The protein resides in the cell membrane. The enzyme catalyses GTP + H2O = GDP + phosphate + H(+). Its activity is regulated as follows. Alternates between an inactive form bound to GDP and an active form bound to GTP. Activated by a guanine nucleotide-exchange factor (GEF) and inactivated by a GTPase-activating protein (GAP). Ras-related protein which binds GDP/GTP and possesses intrinsic GTPase activity. Involved in development of cell polarity during the cell division cycle, and essential for bud emergence. This Saccharomyces cerevisiae (strain ATCC 204508 / S288c) (Baker's yeast) protein is Ras-related protein RSR1.